We begin with the raw amino-acid sequence, 199 residues long: MAISLEKGQRIDLTKGKAGLSKLMVGLGWDPVSSGGGFFSKLLGGGGPNIDCDASVLMLENGKFTDKKNLIYFGNLKSRCGGVQHTGDNLTGDGAGDDEQIMIDLDKVPGNIDKLVFVVNIYDCVRRKQDFGMIQNAFIRVVDQSNHEEMLKYNLRDNYAGRTSLITAEIYRSGSEWKFAAVGEGTNDTRLEDIISRYV.

Belongs to the CAPAB/TerDEXZ family.

Its subcellular location is the cytoplasm. This is Stress response protein SCP2 (yceC) from Bacillus subtilis (strain 168).